The sequence spans 405 residues: uncharacterized protein (405 aa).

12 helical membrane passes run 32–52 (MFVLTLVLFALARFSSPVLAG), 53–73 (WLTFAAIVPGLIVSPLAGVLL), 84–104 (IDMIASTAFITAISLAGWLGW), 108–128 (PVVCTLAMLFSLAGPLGIAGI), 150–170 (AVYSIVDVVGPAMAGGLVGWL), 171–191 (GPEAAMSLIAAACAGAAVCLS), 237–257 (WGALHVVIPVFVAGNYTVAAG), 260–280 (VVGLLWALVGIAGGVGALLAG), 291–311 (IMTAGMAVTAFATWPIAAEFG), 314–334 (GLTIGLLLAGAMSGPIDVAML), 352–372 (ISISVNQAGFPLGAAIAGVVI), and 378–398 (AIFVLAGITSVLAAIATLSIP).

The protein belongs to the major facilitator superfamily.

It localises to the cell membrane. This is an uncharacterized protein from Sinorhizobium fredii (strain NBRC 101917 / NGR234).